Here is a 209-residue protein sequence, read N- to C-terminus: Guanylate kinase (209 aa).

Residues 9-188 (GIMLVMSSPS…SVQQIKSIFI (180 aa)) form the Guanylate kinase-like domain. 16-23 (SPSGGGKT) is an ATP binding site.

The protein belongs to the guanylate kinase family.

Its subcellular location is the cytoplasm. The catalysed reaction is GMP + ATP = GDP + ADP. Functionally, essential for recycling GMP and indirectly, cGMP. This Ehrlichia ruminantium (strain Gardel) protein is Guanylate kinase.